The chain runs to 184 residues: Large ribosomal subunit protein uL6 (184 aa).

This sequence belongs to the universal ribosomal protein uL6 family. In terms of assembly, part of the 50S ribosomal subunit.

Its function is as follows. This protein binds to the 23S rRNA, and is important in its secondary structure. It is located near the subunit interface in the base of the L7/L12 stalk, and near the tRNA binding site of the peptidyltransferase center. The chain is Large ribosomal subunit protein uL6 from Desulfitobacterium hafniense (strain Y51).